The following is a 444-amino-acid chain: ATP-dependent protease ATPase subunit HslU (444 aa).

ATP-binding positions include Val-18, Gly-60–Glu-65, Asp-258, Glu-323, and Arg-395.

It belongs to the ClpX chaperone family. HslU subfamily. In terms of assembly, a double ring-shaped homohexamer of HslV is capped on each side by a ring-shaped HslU homohexamer. The assembly of the HslU/HslV complex is dependent on binding of ATP.

The protein localises to the cytoplasm. Functionally, ATPase subunit of a proteasome-like degradation complex; this subunit has chaperone activity. The binding of ATP and its subsequent hydrolysis by HslU are essential for unfolding of protein substrates subsequently hydrolyzed by HslV. HslU recognizes the N-terminal part of its protein substrates and unfolds these before they are guided to HslV for hydrolysis. This chain is ATP-dependent protease ATPase subunit HslU, found in Thioalkalivibrio sulfidiphilus (strain HL-EbGR7).